Here is a 379-residue protein sequence, read N- to C-terminus: Glutamate 5-kinase (379 aa).

Residue Lys-14 participates in ATP binding. 3 residues coordinate substrate: Ser-54, Asp-141, and Asn-153. ATP-binding positions include 173–174 (TD) and 215–221 (TGGMATK). A PUA domain is found at 280–358 (KGRLLLDIGA…DEIEPLLGYD (79 aa)).

Belongs to the glutamate 5-kinase family.

It is found in the cytoplasm. The enzyme catalyses L-glutamate + ATP = L-glutamyl 5-phosphate + ADP. It functions in the pathway amino-acid biosynthesis; L-proline biosynthesis; L-glutamate 5-semialdehyde from L-glutamate: step 1/2. Its function is as follows. Catalyzes the transfer of a phosphate group to glutamate to form L-glutamate 5-phosphate. The chain is Glutamate 5-kinase from Shewanella amazonensis (strain ATCC BAA-1098 / SB2B).